A 384-amino-acid polypeptide reads, in one-letter code: S-adenosylmethionine synthase (384 aa).

Histidine 15 contributes to the ATP binding site. Aspartate 17 serves as a coordination point for Mg(2+). K(+) is bound at residue glutamate 43. Residues glutamate 56 and glutamine 99 each contribute to the L-methionine site. Residues 99–109 form a flexible loop region; it reads QSSDINQGVDR. Residues 164 to 166, 230 to 231, aspartate 239, 245 to 246, alanine 262, and lysine 266 contribute to the ATP site; these read DAK, RF, and RK. Residue aspartate 239 participates in L-methionine binding. An L-methionine-binding site is contributed by lysine 270.

This sequence belongs to the AdoMet synthase family. In terms of assembly, homotetramer; dimer of dimers. Mg(2+) is required as a cofactor. Requires K(+) as cofactor.

The protein localises to the cytoplasm. The catalysed reaction is L-methionine + ATP + H2O = S-adenosyl-L-methionine + phosphate + diphosphate. It functions in the pathway amino-acid biosynthesis; S-adenosyl-L-methionine biosynthesis; S-adenosyl-L-methionine from L-methionine: step 1/1. Catalyzes the formation of S-adenosylmethionine (AdoMet) from methionine and ATP. The overall synthetic reaction is composed of two sequential steps, AdoMet formation and the subsequent tripolyphosphate hydrolysis which occurs prior to release of AdoMet from the enzyme. This chain is S-adenosylmethionine synthase, found in Pasteurella multocida (strain Pm70).